A 143-amino-acid polypeptide reads, in one-letter code: 6,7-dimethyl-8-ribityllumazine synthase (143 aa).

5-amino-6-(D-ribitylamino)uracil is bound by residues Phe13, 45-47 (TFD), and 69-71 (CVI). 74-75 (ET) serves as a coordination point for (2S)-2-hydroxy-3-oxobutyl phosphate. His77 acts as the Proton donor in catalysis. Leu102 provides a ligand contact to 5-amino-6-(D-ribitylamino)uracil. A (2S)-2-hydroxy-3-oxobutyl phosphate-binding site is contributed by Arg117.

This sequence belongs to the DMRL synthase family.

The catalysed reaction is (2S)-2-hydroxy-3-oxobutyl phosphate + 5-amino-6-(D-ribitylamino)uracil = 6,7-dimethyl-8-(1-D-ribityl)lumazine + phosphate + 2 H2O + H(+). The protein operates within cofactor biosynthesis; riboflavin biosynthesis; riboflavin from 2-hydroxy-3-oxobutyl phosphate and 5-amino-6-(D-ribitylamino)uracil: step 1/2. Functionally, catalyzes the formation of 6,7-dimethyl-8-ribityllumazine by condensation of 5-amino-6-(D-ribitylamino)uracil with 3,4-dihydroxy-2-butanone 4-phosphate. This is the penultimate step in the biosynthesis of riboflavin. In Archaeoglobus fulgidus (strain ATCC 49558 / DSM 4304 / JCM 9628 / NBRC 100126 / VC-16), this protein is 6,7-dimethyl-8-ribityllumazine synthase.